We begin with the raw amino-acid sequence, 207 residues long: Dephospho-CoA kinase (207 aa).

The 198-residue stretch at isoleucine 10 to serine 207 folds into the DPCK domain. An ATP-binding site is contributed by glycine 18–alanine 23.

Belongs to the CoaE family.

It is found in the cytoplasm. It carries out the reaction 3'-dephospho-CoA + ATP = ADP + CoA + H(+). Its pathway is cofactor biosynthesis; coenzyme A biosynthesis; CoA from (R)-pantothenate: step 5/5. Functionally, catalyzes the phosphorylation of the 3'-hydroxyl group of dephosphocoenzyme A to form coenzyme A. The protein is Dephospho-CoA kinase of Pseudomonas syringae pv. syringae (strain B728a).